The following is a 428-amino-acid chain: CinA-like protein (428 aa).

This sequence belongs to the CinA family.

This Mycobacterium leprae (strain TN) protein is CinA-like protein.